We begin with the raw amino-acid sequence, 147 residues long: Hemoglobin subunit gamma (147 aa).

A Globin domain is found at asparagine 3–histidine 147. The heme b site is built by histidine 64 and histidine 93.

The protein belongs to the globin family. As to quaternary structure, heterotetramer of two alpha chains and two gamma chains in fetal hemoglobin (Hb F). In terms of tissue distribution, red blood cells.

Functionally, gamma chains make up the fetal hemoglobin F, in combination with alpha chains. The protein is Hemoglobin subunit gamma (HBG) of Alouatta belzebul (Red-handed howler monkey).